A 291-amino-acid chain; its full sequence is Ribonuclease Z (291 aa).

7 residues coordinate Zn(2+): His60, His62, Asp64, His65, His132, Asp200, and His256. Catalysis depends on Asp64, which acts as the Proton acceptor.

Belongs to the RNase Z family. In terms of assembly, homodimer. The cofactor is Zn(2+).

The enzyme catalyses Endonucleolytic cleavage of RNA, removing extra 3' nucleotides from tRNA precursor, generating 3' termini of tRNAs. A 3'-hydroxy group is left at the tRNA terminus and a 5'-phosphoryl group is left at the trailer molecule.. Zinc phosphodiesterase, which displays some tRNA 3'-processing endonuclease activity. Probably involved in tRNA maturation, by removing a 3'-trailer from precursor tRNA. The protein is Ribonuclease Z of Metallosphaera sedula (strain ATCC 51363 / DSM 5348 / JCM 9185 / NBRC 15509 / TH2).